We begin with the raw amino-acid sequence, 192 residues long: Ribosome hibernation promotion factor (192 aa).

Residues 95 to 129 (RVNRKHKTHGEPEAFVAEVQEAPPENVDDVNAEPT) are disordered. Over residues 120-129 (NVDDVNAEPT) the composition is skewed to acidic residues.

The protein belongs to the HPF/YfiA ribosome-associated protein family. Long HPF subfamily. As to quaternary structure, interacts with 100S ribosomes.

The protein localises to the cytoplasm. Functionally, required for dimerization of active 70S ribosomes into 100S ribosomes in stationary phase; 100S ribosomes are translationally inactive and sometimes present during exponential growth. The chain is Ribosome hibernation promotion factor from Staphylococcus haemolyticus (strain JCSC1435).